A 481-amino-acid chain; its full sequence is Phototropic-responsive NPH3 family protein NPY4 (481 aa).

A BTB domain is found at 29–102; sequence TEIIIIIGNV…CYGITVTLNA (74 aa). Positions 207–450 constitute an NPH3 domain; the sequence is DWWVEDLCEL…VQVLFFEQIR (244 aa). Y391 is subject to Phosphotyrosine. The tract at residues 456 to 481 is disordered; that stretch reads TGYSTPELTTTTLNTEDDEWDHEKEF. A compositionally biased stretch (low complexity) spans 460–469; that stretch reads TPELTTTTLN.

This sequence belongs to the NPH3 family. Expressed in the hypocotyl cells that would differentiate into vascular bundles. Highly expressed in primary root tips and radicles.

It is found in the cell membrane. It localises to the cytoplasm. The protein resides in the cytosol. It functions in the pathway protein modification; protein ubiquitination. May act as a substrate-specific adapter of an E3 ubiquitin-protein ligase complex (CUL3-RBX1-BTB) which mediates the ubiquitination and subsequent proteasomal degradation of target proteins. Plays an essential role in auxin-mediated organogenesis and in root gravitropic responses through the control of PIN proteins (e.g. PIN1 and PIN2) polarity in the root tip endodermal cell layer and in shoot epidermis. Recruited to the plasma membrane by PINs (e.g. PIN1 and PIN2) and, in concert with AGC kinases-mediated (e.g. D6PK and PID) PINs phosphorylation, maintains their polarity through limiting lateral diffusion-based escape. This is Phototropic-responsive NPH3 family protein NPY4 from Arabidopsis thaliana (Mouse-ear cress).